The following is a 466-amino-acid chain: Tyrosinase HcTyr1 (466 aa).

Cu cation-binding residues include His-43, His-78, His-87, His-211, His-215, and His-238.

It belongs to the tyrosinase family. In terms of assembly, monomer. Formation of a dimer is observed when the protein is in its holo-form. The cofactor is Cu(2+). In vitro, the C-terminal lid-domain is slowly cleaved off in an autoprocessive time dependent manner, leading to the formation of cleaved-HcTyr1. The processing rate is not influenced by factors such as pH and added metal ions.

The catalysed reaction is L-tyrosine + O2 = L-dopaquinone + H2O. It carries out the reaction 2 L-tyrosine + O2 = 2 L-dopa. It catalyses the reaction 2 L-dopa + O2 = 2 L-dopaquinone + 2 H2O. Cleavage of the lid-domain increases activity levels, affinity for substrate and turnover rate. Exhibits high saline tolerance. Functionally, copper-containing oxidase that catalyzes the conversion of L-tyrosine to L-dopa and then to L-dopaquinone. Can use various phenols such as p-coumaric acid, phenol, pyrocatechol, syringol or pyrogallol. Accepts several of the constituents of lignin and potentially participates in lignin functionalization. This Hahella sp. (strain CCB-MM4) protein is Tyrosinase HcTyr1.